The primary structure comprises 498 residues: ATP synthase subunit beta, chloroplastic (498 aa).

An ATP-binding site is contributed by 172–179; the sequence is GGAGVGKT.

Belongs to the ATPase alpha/beta chains family. F-type ATPases have 2 components, CF(1) - the catalytic core - and CF(0) - the membrane proton channel. CF(1) has five subunits: alpha(3), beta(3), gamma(1), delta(1), epsilon(1). CF(0) has four main subunits: a(1), b(1), b'(1) and c(9-12).

The protein localises to the plastid. It localises to the chloroplast thylakoid membrane. It catalyses the reaction ATP + H2O + 4 H(+)(in) = ADP + phosphate + 5 H(+)(out). Produces ATP from ADP in the presence of a proton gradient across the membrane. The catalytic sites are hosted primarily by the beta subunits. This is ATP synthase subunit beta, chloroplastic from Nicotiana rustica (Aztec tobacco).